A 413-amino-acid chain; its full sequence is Argininosuccinate synthase (413 aa).

ATP is bound at residue 22–30 (AYSGGLDTS). L-citrulline contacts are provided by Tyr100 and Ser105. Residue Gly130 coordinates ATP. Thr132, Asn136, and Asp137 together coordinate L-aspartate. Asn136 contacts L-citrulline. Residues Arg140, Ser189, Ser198, Glu274, and Tyr286 each coordinate L-citrulline.

It belongs to the argininosuccinate synthase family. Type 1 subfamily. Homotetramer.

The protein resides in the cytoplasm. The enzyme catalyses L-citrulline + L-aspartate + ATP = 2-(N(omega)-L-arginino)succinate + AMP + diphosphate + H(+). The protein operates within amino-acid biosynthesis; L-arginine biosynthesis; L-arginine from L-ornithine and carbamoyl phosphate: step 2/3. In Endomicrobium trichonymphae, this protein is Argininosuccinate synthase.